Here is a 254-residue protein sequence, read N- to C-terminus: Probable transcriptional regulatory protein HDEF_0869 (254 aa).

The interval 1–20 is disordered; sequence MAGHSKWANTKHRKAAQDAK.

This sequence belongs to the TACO1 family.

The protein localises to the cytoplasm. The chain is Probable transcriptional regulatory protein HDEF_0869 from Hamiltonella defensa subsp. Acyrthosiphon pisum (strain 5AT).